A 136-amino-acid polypeptide reads, in one-letter code: uncharacterized protein (136 aa).

This is an uncharacterized protein from Gallus gallus (Chicken).